The chain runs to 350 residues: Glycosyltransferase 8 domain-containing protein 2 (350 aa).

Over 1-6 (MALLRK) the chain is Cytoplasmic. A helical; Signal-anchor for type II membrane protein transmembrane segment spans residues 7 to 24 (INQVLLFLLIVTLCGILY). Residues 25 to 349 (KKVHKGTMLR…AGIFKLHHPN (325 aa)) lie on the Lumenal side of the membrane. N-linked (GlcNAc...) asparagine glycosylation is present at Asn-234.

The protein belongs to the glycosyltransferase 8 family.

It is found in the membrane. The sequence is that of Glycosyltransferase 8 domain-containing protein 2 (GLT8D2) from Bos taurus (Bovine).